The following is a 188-amino-acid chain: MKTAQEIRAGNVVMIGTEPMVVQKAEFNKSGRNSAVVKMKLKGLLNGSATETVFKADDKLDVVQLERKECTYSYFSDPLYVFMDTEYNQYDVEKDNLGDVLNYLVDGMEDICEVTFYNEKAISVELPTTIVREVEYTEPAARGDTSGKVTKPARLKGTAYELAVAAFVEIGDKIEIDSRTGEFKRRLS.

It belongs to the elongation factor P family.

The protein localises to the cytoplasm. Its pathway is protein biosynthesis; polypeptide chain elongation. Functionally, involved in peptide bond synthesis. Stimulates efficient translation and peptide-bond synthesis on native or reconstituted 70S ribosomes in vitro. Probably functions indirectly by altering the affinity of the ribosome for aminoacyl-tRNA, thus increasing their reactivity as acceptors for peptidyl transferase. The chain is Elongation factor P from Aeromonas salmonicida (strain A449).